The primary structure comprises 548 residues: Non-structural protein NS1 (548 aa).

The protein belongs to the orbivirus non-structural protein NS1 family.

The protein is Non-structural protein NS1 (Segment-5) of Camelus dromedarius (Dromedary).